We begin with the raw amino-acid sequence, 598 residues long: MQHKHIRNFSIIAHIDHGKSTLSDRLIQHCGGLSEREMSAQVLDSMDIERERGITIKAQSVTLNYKARDGETYQLNFIDTPGHVDFSYEVSRSLAACEGALLVVDAGQGVEAQTLANCYTAIDLNMEVVPILNKIDLPQAEPDRVAEEIEDIVGIDAIDAVRCSAKTGIGIEDVLEVIVRQIPPPEGDIDAPLKALIVDSWFDNYQGVVSLVRIVQGELRKNDKIKIMSTGVVHQADKVGIFTPKATDTGILRAGEVGFIVAGIKEIHGAPVGDTITLARAPADAALPGFKKVKPQVYAGLFPISSDDYEDFRDALAKLSLNDASLFFEPESSSALGFGFRIGFLGMLHMEIIQERLEREYDLDLITTAPTVVYEVVTTDGETLYVDNPSKLPPVNSIDEIHEPIVEAHILVPQEYLGSVITLCVDKRGVQTSMTYHGKQVAVTYELPMAEVVMDFFDKLKSTSRGFASLDYNFKHFQTAEMSRLDILINGERVDALAMITHKDNAQSRGRDLVEKLRELIPRQMFDIAIQAAIGNQIVARSTIKQLRKNVIAKCYGGDVSRKKKLLQKQKDGKKRMKSVGNVELPQEAFLALLKVGK.

A tr-type G domain is found at 4–186 (KHIRNFSIIA…VIVRQIPPPE (183 aa)). GTP-binding positions include 16 to 21 (DHGKST) and 133 to 136 (NKID).

Belongs to the TRAFAC class translation factor GTPase superfamily. Classic translation factor GTPase family. LepA subfamily.

It is found in the cell inner membrane. It carries out the reaction GTP + H2O = GDP + phosphate + H(+). Its function is as follows. Required for accurate and efficient protein synthesis under certain stress conditions. May act as a fidelity factor of the translation reaction, by catalyzing a one-codon backward translocation of tRNAs on improperly translocated ribosomes. Back-translocation proceeds from a post-translocation (POST) complex to a pre-translocation (PRE) complex, thus giving elongation factor G a second chance to translocate the tRNAs correctly. Binds to ribosomes in a GTP-dependent manner. This is Elongation factor 4 from Pseudoalteromonas atlantica (strain T6c / ATCC BAA-1087).